A 182-amino-acid chain; its full sequence is NADH-quinone oxidoreductase subunit I (182 aa).

2 4Fe-4S ferredoxin-type domains span residues 52–82 (LTRD…LQKA) and 92–121 (DFFR…LTPD). Residues Cys-62, Cys-65, Cys-68, Cys-72, Cys-101, Cys-104, Cys-107, and Cys-111 each coordinate [4Fe-4S] cluster.

Belongs to the complex I 23 kDa subunit family. As to quaternary structure, NDH-1 is composed of 13 different subunits. Subunits NuoA, H, J, K, L, M, N constitute the membrane sector of the complex. It depends on [4Fe-4S] cluster as a cofactor.

The protein resides in the cell inner membrane. It catalyses the reaction a quinone + NADH + 5 H(+)(in) = a quinol + NAD(+) + 4 H(+)(out). NDH-1 shuttles electrons from NADH, via FMN and iron-sulfur (Fe-S) centers, to quinones in the respiratory chain. The immediate electron acceptor for the enzyme in this species is believed to be ubiquinone. Couples the redox reaction to proton translocation (for every two electrons transferred, four hydrogen ions are translocated across the cytoplasmic membrane), and thus conserves the redox energy in a proton gradient. The polypeptide is NADH-quinone oxidoreductase subunit I (Pseudomonas fluorescens (strain ATCC BAA-477 / NRRL B-23932 / Pf-5)).